Reading from the N-terminus, the 176-residue chain is 3-hydroxydecanoyl-[acyl-carrier-protein] dehydratase (176 aa).

His70 is an active-site residue.

Belongs to the thioester dehydratase family. FabA subfamily. In terms of assembly, homodimer.

It localises to the cytoplasm. It carries out the reaction a (3R)-hydroxyacyl-[ACP] = a (2E)-enoyl-[ACP] + H2O. The catalysed reaction is (3R)-hydroxydecanoyl-[ACP] = (2E)-decenoyl-[ACP] + H2O. The enzyme catalyses (2E)-decenoyl-[ACP] = (3Z)-decenoyl-[ACP]. Its pathway is lipid metabolism; fatty acid biosynthesis. In terms of biological role, necessary for the introduction of cis unsaturation into fatty acids. Catalyzes the dehydration of (3R)-3-hydroxydecanoyl-ACP to E-(2)-decenoyl-ACP and then its isomerization to Z-(3)-decenoyl-ACP. Can catalyze the dehydratase reaction for beta-hydroxyacyl-ACPs with saturated chain lengths up to 16:0, being most active on intermediate chain length. This Alkalilimnicola ehrlichii (strain ATCC BAA-1101 / DSM 17681 / MLHE-1) protein is 3-hydroxydecanoyl-[acyl-carrier-protein] dehydratase.